We begin with the raw amino-acid sequence, 110 residues long: Chagasin (110 aa).

The BC loop motif lies at 29–34 (NPTTGF). Positions 59–68 (PPDSKLLGAG) match the DE loop motif. An FG loop motif is present at residues 91-100 (RPWTGPSHDS).

The protein belongs to the protease inhibitor I42 family. In terms of assembly, interacts with cruzipain.

The protein resides in the flagellar pocket. The protein localises to the cytoplasmic vesicle. Its subcellular location is the cell surface. Cysteine protease inhibitor. Inhibits cysteine protease cruzipain. The protein is Chagasin (cha) of Trypanosoma cruzi.